We begin with the raw amino-acid sequence, 340 residues long: Aliphatic sulfonates import ATP-binding protein SsuB 1 (340 aa).

The segment at 44-72 is disordered; it reads THHHARVAAQGHARGDAQPPAGALARDDG. The region spanning 80-299 is the ABC transporter domain; sequence VQLRGVGKRY…ARASAGFAAL (220 aa). Residue 112-119 participates in ATP binding; it reads GRSGCGKS.

This sequence belongs to the ABC transporter superfamily. Aliphatic sulfonates importer (TC 3.A.1.17.2) family. The complex is composed of two ATP-binding proteins (SsuB), two transmembrane proteins (SsuC) and a solute-binding protein (SsuA).

It localises to the cell inner membrane. The enzyme catalyses ATP + H2O + aliphatic sulfonate-[sulfonate-binding protein]Side 1 = ADP + phosphate + aliphatic sulfonateSide 2 + [sulfonate-binding protein]Side 1.. Part of the ABC transporter complex SsuABC involved in aliphatic sulfonates import. Responsible for energy coupling to the transport system. In Paraburkholderia xenovorans (strain LB400), this protein is Aliphatic sulfonates import ATP-binding protein SsuB 1.